The chain runs to 962 residues: Splicing regulator ARVCF (962 aa).

Residues 11–46 (SILASVKEQEARFERLTRALEQERRHVALQLERAQQ) adopt a coiled-coil conformation. The tract at residues 95–123 (VTVEEDPGTPTSHVSIVTSEDGTTRRTET) is disordered. Phosphothreonine is present on residues T103 and T105. The segment covering 103-115 (TPTSHVSIVTSED) has biased composition (polar residues). R171 is modified (omega-N-methylarginine). 3 disordered regions span residues 233 to 255 (GRRE…LPEH), 268 to 291 (RSLA…TRRR), and 322 to 357 (AATA…EPRW). S269 carries the phosphoserine modification. Positions 272-282 (ADDEGGPDLEP) are enriched in acidic residues. Phosphoserine occurs at positions 334, 337, 345, and 347. ARM repeat units lie at residues 350 to 389 (STRK…HLCF), 392 to 431 (EGIK…NLSY), 435 to 469 (TDNK…VTGT), 470 to 510 (LWNL…NEDS), 528 to 567 (LRNV…DTDN), and 577 to 623 (MRNL…GKKA). Residues 593–618 (RYQEAEPGIPGSTTSQRRRKDDASCF) are disordered. The residue at position 607 (S607) is a Phosphoserine. The Nuclear localization signal motif lies at 608–624 (QRRRKDDASCFGGKKAK). T643 carries the post-translational modification Phosphothreonine. 4 ARM repeats span residues 647-687 (PKRT…AAGA), 700-739 (TYIR…NLSL), 740-782 (DQRN…AVLN), and 783-827 (TIHE…SHVL). Residues 777–962 (VVAVLNTIHE…TKPQPVDSWV (186 aa)) are required for interaction with RNA-binding proteins DDX5, HNRNPH2 and SRSF1 and with mRNAs. Residues 844–962 (GWTKSRFQSA…TKPQPVDSWV (119 aa)) are disordered. A phosphoserine mark is found at S864 and S871. At T872 the chain carries Phosphothreonine. 2 stretches are compositionally biased toward basic and acidic residues: residues 878 to 887 (KSLDGEKSNT) and 920 to 932 (TSEK…DPGR).

It belongs to the beta-catenin family. In terms of assembly, component of a ribonucleoprotein complex containing mRNAs and RNA-binding proteins including DDX5, HNRNPH2 and SRSF1 as well as ARVCF. Interacts (via the extreme C-terminus) with FRMPD2 (via the PDZ 2 domain). Interacts with CCDC85B.

The protein localises to the cell junction. The protein resides in the adherens junction. Its subcellular location is the nucleus. It localises to the cytoplasm. Its function is as follows. Contributes to the regulation of alternative splicing of pre-mRNAs. This chain is Splicing regulator ARVCF (Arvcf), found in Mus musculus (Mouse).